We begin with the raw amino-acid sequence, 320 residues long: UV DNA damage endonuclease (320 aa).

Belongs to the uve1/UvsE family.

Component in a DNA repair pathway. Removal of UV LIGHT damaged nucleotides. Recognizes pyrimidine dimers and cleave a phosphodiester bond immediately 5' to the lesion. The sequence is that of UV DNA damage endonuclease from Bacillus pumilus (strain SAFR-032).